The sequence spans 150 residues: Deoxyuridine 5'-triphosphate nucleotidohydrolase (150 aa).

Substrate is bound by residues Arg-69–Gly-71, Asn-82, and Leu-86–Asp-88.

This sequence belongs to the dUTPase family. Mg(2+) serves as cofactor.

It carries out the reaction dUTP + H2O = dUMP + diphosphate + H(+). It functions in the pathway pyrimidine metabolism; dUMP biosynthesis; dUMP from dCTP (dUTP route): step 2/2. In terms of biological role, this enzyme is involved in nucleotide metabolism: it produces dUMP, the immediate precursor of thymidine nucleotides and it decreases the intracellular concentration of dUTP so that uracil cannot be incorporated into DNA. The polypeptide is Deoxyuridine 5'-triphosphate nucleotidohydrolase (Chromobacterium violaceum (strain ATCC 12472 / DSM 30191 / JCM 1249 / CCUG 213 / NBRC 12614 / NCIMB 9131 / NCTC 9757 / MK)).